Consider the following 1335-residue polypeptide: Bifunctional autolysin (1335 aa).

The signal sequence occupies residues 1-29 (MAKKFNYKLPSMVALTLFGTAFTAHQANA). Disordered regions lie at residues 51-88 (QAEK…QSTT), 100-262 (NEIS…KYKE), and 514-535 (WGTT…NNKL). 5 stretches are compositionally biased toward polar residues: residues 58–88 (EVTQ…QSTT), 100–127 (NEIS…VTKN), 143–155 (TDTN…QSVA), 176–223 (TASQ…NASG), and 244–258 (SLNN…TTSY). Residues 303-863 (VSSQKTSSLP…LSTQSTPAPK (561 aa)) form an N-acetylmuramoyl-L-alanine amidase region. The segment covering 515–531 (GTTSTKPSQPSKPSGGT) has biased composition (low complexity). 7 GW domains span residues 533–610 (NKLT…YNTA), 612–686 (APVK…TASK), 700–774 (TVTN…YNTA), 776–850 (SPVK…APSK), 868–943 (STQT…TQNI), 945–1020 (KQTQ…QNST), and 1023–1096 (QSTP…KEKI). The segment at 864–1335 (QVKPSTQTVN…GKYFEIPTYK (472 aa)) is endo-beta-N-acetylglucosaminidase.

This sequence in the N-terminal section; belongs to the N-acetylmuramoyl-L-alanine amidase 2 family. The protein in the C-terminal section; belongs to the glycosyl hydrolase 73 family. Oligomer; forms a ring structure at the cell surface which is important for efficient partitioning of daughter cells after cell division. Undergoes proteolytic processing to generate the two extracellular lytic enzymes, probably at the septal region on the cell surface.

It is found in the secreted. It catalyses the reaction Hydrolyzes the link between N-acetylmuramoyl residues and L-amino acid residues in certain cell-wall glycopeptides.. The catalysed reaction is an N(4)-(oligosaccharide-(1-&gt;3)-[oligosaccharide-(1-&gt;6)]-beta-D-Man-(1-&gt;4)-beta-D-GlcNAc-(1-&gt;4)-alpha-D-GlcNAc)-L-asparaginyl-[protein] + H2O = an oligosaccharide-(1-&gt;3)-[oligosaccharide-(1-&gt;6)]-beta-D-Man-(1-&gt;4)-D-GlcNAc + N(4)-(N-acetyl-beta-D-glucosaminyl)-L-asparaginyl-[protein]. In terms of biological role, endohydrolysis of the di-N-acetylchitobiosyl unit in high-mannose glycopeptides and glycoproteins containing the -[(Man)5(GlcNAc)2]-Asn structure. One N-acetyl-D-glucosamine residue remains attached to the protein; the rest of the oligosaccharide is released intact. Cleaves the peptidoglycan connecting the daughter cells at the end of the cell division cycle, resulting in the separation of the two newly divided cells. Acts as an autolysin in penicillin-induced lysis. As a bacterial surface-associated protein, mediates attachment to polystyrene surfaces, contributing to biofilm formation. Also has vitronectin-binding activity. The chain is Bifunctional autolysin (atl) from Staphylococcus epidermidis.